Reading from the N-terminus, the 710-residue chain is Probable thimet oligopeptidase (710 aa).

His-502 contacts Zn(2+). Residue Glu-503 is part of the active site. His-506 lines the Zn(2+) pocket.

The protein belongs to the peptidase M3 family. Zn(2+) serves as cofactor.

Its subcellular location is the cytoplasm. The catalysed reaction is Preferential cleavage of bonds with hydrophobic residues at P1, P2 and P3' and a small residue at P1' in substrates of 5 to 15 residues.. Its function is as follows. Involved in cytoplasmic peptide degradation. This Arabidopsis thaliana (Mouse-ear cress) protein is Probable thimet oligopeptidase.